A 21-amino-acid chain; its full sequence is M-lycotoxin-Ls4a (21 aa).

At L21 the chain carries Leucine amide.

In terms of tissue distribution, expressed by the venom gland.

The protein resides in the secreted. In terms of biological role, may inhibit growth of bacteria. The sequence is that of M-lycotoxin-Ls4a from Lycosa singoriensis (Wolf spider).